The sequence spans 609 residues: Isocitrate dehydrogenase kinase/phosphatase (609 aa).

Residues alanine 325–methionine 331 and lysine 346 contribute to the ATP site. The active site involves aspartate 381.

It belongs to the AceK family.

It is found in the cytoplasm. The enzyme catalyses L-seryl-[isocitrate dehydrogenase] + ATP = O-phospho-L-seryl-[isocitrate dehydrogenase] + ADP + H(+). Bifunctional enzyme which can phosphorylate or dephosphorylate isocitrate dehydrogenase (IDH) on a specific serine residue. This is a regulatory mechanism which enables bacteria to bypass the Krebs cycle via the glyoxylate shunt in response to the source of carbon. When bacteria are grown on glucose, IDH is fully active and unphosphorylated, but when grown on acetate or ethanol, the activity of IDH declines drastically concomitant with its phosphorylation. The protein is Isocitrate dehydrogenase kinase/phosphatase of Acidovorax sp. (strain JS42).